The primary structure comprises 439 residues: Uracil-regulated protein 1 (439 aa).

Residues 1 to 24 are disordered; the sequence is MLATEQSRPAECNGAHAHEKTEEV. A GTP-binding site is contributed by 268–272; the sequence is RVHDE. Residues C273, C284, and C286 each contribute to the Zn(2+) site. Residue 315-317 participates in GTP binding; sequence EGR. D353 serves as the catalytic Proton acceptor. R355 functions as the Nucleophile in the catalytic mechanism. Residues S377 and K382 each contribute to the GTP site.

The protein belongs to the GTP cyclohydrolase II family.

The protein localises to the cytoplasm. Its subcellular location is the nucleus. The sequence is that of Uracil-regulated protein 1 (urg1) from Schizosaccharomyces pombe (strain 972 / ATCC 24843) (Fission yeast).